Reading from the N-terminus, the 400-residue chain is Tryptophan synthase beta chain (400 aa).

An N6-(pyridoxal phosphate)lysine modification is found at lysine 92.

This sequence belongs to the TrpB family. As to quaternary structure, tetramer of two alpha and two beta chains. Pyridoxal 5'-phosphate is required as a cofactor.

It carries out the reaction (1S,2R)-1-C-(indol-3-yl)glycerol 3-phosphate + L-serine = D-glyceraldehyde 3-phosphate + L-tryptophan + H2O. It participates in amino-acid biosynthesis; L-tryptophan biosynthesis; L-tryptophan from chorismate: step 5/5. Its function is as follows. The beta subunit is responsible for the synthesis of L-tryptophan from indole and L-serine. The protein is Tryptophan synthase beta chain of Neisseria meningitidis serogroup A / serotype 4A (strain DSM 15465 / Z2491).